A 296-amino-acid polypeptide reads, in one-letter code: Ribosomal protein L11 methyltransferase (296 aa).

4 residues coordinate S-adenosyl-L-methionine: Thr139, Gly163, Asp185, and Asn232.

It belongs to the methyltransferase superfamily. PrmA family.

The protein localises to the cytoplasm. The enzyme catalyses L-lysyl-[protein] + 3 S-adenosyl-L-methionine = N(6),N(6),N(6)-trimethyl-L-lysyl-[protein] + 3 S-adenosyl-L-homocysteine + 3 H(+). Methylates ribosomal protein L11. The protein is Ribosomal protein L11 methyltransferase of Picosynechococcus sp. (strain ATCC 27264 / PCC 7002 / PR-6) (Agmenellum quadruplicatum).